The chain runs to 348 residues: Ephrin-4 (348 aa).

Residues 1–20 (MKQFFEFLITTFLLLGLAAA) form the signal peptide. Residues 21-178 (DEHIVYWNST…SQNMRLSMKV (158 aa)) form the Ephrin RBD domain. An N-linked (GlcNAc...) asparagine glycan is attached at N28. Disulfide bonds link C53/C91 and C79/C167. The N-linked (GlcNAc...) asparagine glycan is linked to N157. The interval 207-237 (GGQEDEDSDNDNAHLLPRDLEGSTNPKFRRP) is disordered. The GPI-anchor amidated serine moiety is linked to residue S329. A propeptide spans 330–348 (STSLSTNFAILLAVIYVLY) (removed in mature form).

This sequence belongs to the ephrin family. In terms of assembly, interacts with lat-2. In terms of processing, may undergo proteolysis by metalloprotease sup-17 to give rise to a soluble form.

It is found in the cell membrane. Functionally, regulates the formation or stabilization of cell-cell contacts at several stages of epithelial morphogenesis. In early embryonic development, involved in ventral closure of the epidermis. During male tail morphogenesis, regulates precursor cell sorting together with mab-20 and allows the formation of distinct sensory rays. Probably acts as a ligand for lad-2 to regulate axon guidance of several neurons including SDQL, SDQR, SMD and PLN neurons during neurogenesis. The chain is Ephrin-4 (efn-4) from Caenorhabditis elegans.